The sequence spans 1045 residues: 3-hydroxy-3-methylglutaryl-coenzyme A reductase 2 (1045 aa).

Residues 1–24 (MSLPLKTIVHLVKPFACTARFSAR) are Cytoplasmic-facing. The helical transmembrane segment at 25–45 (YPIHVIVVAVLLSAAAYLSVT) threads the bilayer. Topologically, residues 46 to 186 (QSYLNEWKLD…FSNKTSEFDQ (141 aa)) are lumenal. N-linked (GlcNAc...) asparagine glycans are attached at residues Asn115, Asn150, Asn158, and Asn179. A helical transmembrane segment spans residues 187–207 (FDLFIILAAYLTLFYTLCCLF). In terms of domain architecture, SSD spans 188–356 (DLFIILAAYL…ATFYSAILSM (169 aa)). Residues 208-216 (NDMRKIGSK) lie on the Cytoplasmic side of the membrane. The chain crosses the membrane as a helical span at residues 217–237 (FWLSFSALSNSACALYLSLYT). Residues 238 to 243 (THSLLK) are Lumenal-facing. Residues 244–264 (KPASLLSLVIGLPFIVVIIGF) form a helical membrane-spanning segment. Over 265-301 (KHKVRLAAFSLQKFHRISIDKKITVSNIIYEAMFQEG) the chain is Cytoplasmic. Residues 302–322 (AYLIRDYLFYISSFIGCAIYA) form a helical membrane-spanning segment. Topologically, residues 323-324 (RH) are lumenal. Residues 325 to 345 (LPGLVNFCILSTFMLVFDLLL) traverse the membrane as a helical segment. Topologically, residues 346–402 (SATFYSAILSMKLEINIIHRSTVIRQTLEEDGVVPTTADIIYKDETASEPHFLRSNV) are cytoplasmic. A helical membrane pass occupies residues 403–423 (AIILGKASVIGLLLLINLYVF). Residues 424-497 (TDKLNATILN…DSVSNAIRDQ (74 aa)) lie on the Lumenal side of the membrane. N-linked (GlcNAc...) asparagine glycosylation is found at Asn428 and Asn455. A helical transmembrane segment spans residues 498–518 (FISKLLFFAFAVSISINVYLL). At 519–1045 (NAAKIHTGYM…GPPCKTSALL (527 aa)) the chain is on the cytoplasmic side. Thr565 carries the phosphothreonine modification. The active-site Charge relay system is Glu710. 716–722 (SAMRGCK) lines the CoA pocket. NADP(+)-binding positions include 777–779 (SRF) and 804–812 (DAMGMNMIS). Residue Lys844 is the Charge relay system of the active site. 873–875 (VLK) serves as a coordination point for CoA. The Charge relay system role is filled by Asp920. 1015-1016 (SH) contacts CoA. The Proton donor role is filled by His1016. Positions 1018–1045 (THNRKTNKANELPQPSNKGPPCKTSALL) are disordered. Position 1020–1021 (1020–1021 (NR)) interacts with NADP(+).

This sequence belongs to the HMG-CoA reductase family.

The protein resides in the endoplasmic reticulum membrane. The protein localises to the nucleus envelope. The enzyme catalyses (R)-mevalonate + 2 NADP(+) + CoA = (3S)-3-hydroxy-3-methylglutaryl-CoA + 2 NADPH + 2 H(+). Its pathway is metabolic intermediate biosynthesis; (R)-mevalonate biosynthesis; (R)-mevalonate from acetyl-CoA: step 3/3. Functionally, HMG-CoA reductase; part of the first module of ergosterol biosynthesis pathway constitutes by the early steps of the pathway, conserved across all eukaryotes, and which results in the formation of mevalonate from acetyl-coenzyme A (acetyl-CoA). HMG1 and HMG2 catalyze the reduction of hydroxymethylglutaryl-CoA (HMG-CoA) to mevalonate that is the rate-limiting step within the first mosule. The first module starts with the action of the cytosolic acetyl-CoA acetyltransferase ERG10 that catalyzes the formation of acetoacetyl-CoA. The hydroxymethylglutaryl-CoA synthase ERG13 then condenses acetyl-CoA with acetoacetyl-CoA to form HMG-CoA. The rate-limiting step of the early module is the reduction to mevalonate by the 3-hydroxy-3-methylglutaryl-coenzyme A (HMG-CoA) reductases HMG1 and HMG2 which are derived from a single ancestral HMGR gene by gene duplication. The chain is 3-hydroxy-3-methylglutaryl-coenzyme A reductase 2 from Saccharomyces cerevisiae (strain ATCC 204508 / S288c) (Baker's yeast).